The sequence spans 503 residues: Aromatase 2 (503 aa).

C437 is a binding site for heme.

This sequence belongs to the cytochrome P450 family. Heme serves as cofactor.

The protein resides in the membrane. It catalyses the reaction testosterone + 3 reduced [NADPH--hemoprotein reductase] + 3 O2 = 17beta-estradiol + formate + 3 oxidized [NADPH--hemoprotein reductase] + 4 H2O + 4 H(+). It carries out the reaction androst-4-ene-3,17-dione + 3 reduced [NADPH--hemoprotein reductase] + 3 O2 = estrone + formate + 3 oxidized [NADPH--hemoprotein reductase] + 4 H2O + 4 H(+). Catalyzes the formation of aromatic C18 estrogens from C19 androgens. This Sus scrofa (Pig) protein is Aromatase 2 (CYP19A2).